Consider the following 178-residue polypeptide: Ribosome maturation factor RimM (178 aa).

The PRC barrel domain occupies 100-178 (TDGEYYWYQL…EMKVEWDADF (79 aa)).

It belongs to the RimM family. Binds ribosomal protein uS19.

It localises to the cytoplasm. An accessory protein needed during the final step in the assembly of 30S ribosomal subunit, possibly for assembly of the head region. Essential for efficient processing of 16S rRNA. May be needed both before and after RbfA during the maturation of 16S rRNA. It has affinity for free ribosomal 30S subunits but not for 70S ribosomes. This is Ribosome maturation factor RimM from Pseudomonas fluorescens (strain SBW25).